A 466-amino-acid polypeptide reads, in one-letter code: 23S rRNA (uracil(1939)-C(5))-methyltransferase RlmD (466 aa).

A TRAM domain is found at 11-69 (KITDTKHKEIVINRLDHLGAGIGHLNNKSIFVDGLLPGEKALVQITDDKKQYARAKVIK). Residues C82, C88, C91, and C184 each coordinate [4Fe-4S] cluster. Positions 287, 316, 321, 337, 364, and 385 each coordinate S-adenosyl-L-methionine. The active-site Nucleophile is C411.

This sequence belongs to the class I-like SAM-binding methyltransferase superfamily. RNA M5U methyltransferase family. RlmD subfamily.

It carries out the reaction uridine(1939) in 23S rRNA + S-adenosyl-L-methionine = 5-methyluridine(1939) in 23S rRNA + S-adenosyl-L-homocysteine + H(+). Functionally, catalyzes the formation of 5-methyl-uridine at position 1939 (m5U1939) in 23S rRNA. This is 23S rRNA (uracil(1939)-C(5))-methyltransferase RlmD from Photobacterium profundum (strain SS9).